Here is a 312-residue protein sequence, read N- to C-terminus: Acetyl-coenzyme A carboxylase carboxyl transferase subunit alpha (312 aa).

The CoA carboxyltransferase C-terminal domain occupies 36–286; it reads NLEKEISKTY…ADYVKKSLNE (251 aa).

Belongs to the AccA family. In terms of assembly, acetyl-CoA carboxylase is a heterohexamer composed of biotin carboxyl carrier protein (AccB), biotin carboxylase (AccC) and two subunits each of ACCase subunit alpha (AccA) and ACCase subunit beta (AccD).

It localises to the cytoplasm. It catalyses the reaction N(6)-carboxybiotinyl-L-lysyl-[protein] + acetyl-CoA = N(6)-biotinyl-L-lysyl-[protein] + malonyl-CoA. The protein operates within lipid metabolism; malonyl-CoA biosynthesis; malonyl-CoA from acetyl-CoA: step 1/1. Its function is as follows. Component of the acetyl coenzyme A carboxylase (ACC) complex. First, biotin carboxylase catalyzes the carboxylation of biotin on its carrier protein (BCCP) and then the CO(2) group is transferred by the carboxyltransferase to acetyl-CoA to form malonyl-CoA. The polypeptide is Acetyl-coenzyme A carboxylase carboxyl transferase subunit alpha (Campylobacter jejuni subsp. jejuni serotype O:23/36 (strain 81-176)).